A 141-amino-acid polypeptide reads, in one-letter code: Large ribosomal subunit protein uL11 (141 aa).

This sequence belongs to the universal ribosomal protein uL11 family. As to quaternary structure, part of the ribosomal stalk of the 50S ribosomal subunit. Interacts with L10 and the large rRNA to form the base of the stalk. L10 forms an elongated spine to which L12 dimers bind in a sequential fashion forming a multimeric L10(L12)X complex. Post-translationally, one or more lysine residues are methylated.

In terms of biological role, forms part of the ribosomal stalk which helps the ribosome interact with GTP-bound translation factors. This is Large ribosomal subunit protein uL11 from Moorella thermoacetica (strain ATCC 39073 / JCM 9320).